Here is a 352-residue protein sequence, read N- to C-terminus: Glycerol-1-phosphate dehydrogenase [NAD(P)+] (352 aa).

NAD(+) is bound by residues 99-103 and 121-124; these read GTKID and TSPS. D126 contacts substrate. An NAD(+)-binding site is contributed by S130. Residue D173 coordinates substrate. 2 residues coordinate Zn(2+): D173 and H253. Residue H257 participates in substrate binding. H269 contributes to the Zn(2+) binding site.

Belongs to the glycerol-1-phosphate dehydrogenase family. Requires Zn(2+) as cofactor.

It is found in the cytoplasm. It catalyses the reaction sn-glycerol 1-phosphate + NAD(+) = dihydroxyacetone phosphate + NADH + H(+). The catalysed reaction is sn-glycerol 1-phosphate + NADP(+) = dihydroxyacetone phosphate + NADPH + H(+). It participates in membrane lipid metabolism; glycerophospholipid metabolism. Its function is as follows. Catalyzes the NAD(P)H-dependent reduction of dihydroxyacetonephosphate (DHAP or glycerone phosphate) to glycerol 1-phosphate (G1P). The G1P thus generated is used as the glycerophosphate backbone of phospholipids in the cellular membranes of Archaea. The sequence is that of Glycerol-1-phosphate dehydrogenase [NAD(P)+] from Thermoplasma volcanium (strain ATCC 51530 / DSM 4299 / JCM 9571 / NBRC 15438 / GSS1).